The chain runs to 543 residues: Cytochrome P450 monooxygenase sphH (543 aa).

A run of 2 helical transmembrane segments spans residues methionine 1–phenylalanine 21 and isoleucine 32–phenylalanine 52. Cysteine 487 provides a ligand contact to heme.

This sequence belongs to the cytochrome P450 family. Heme is required as a cofactor.

Its subcellular location is the membrane. It catalyses the reaction presphingofungin + 2 reduced [NADPH--hemoprotein reductase] + O2 = sphingofungin B1 + 2 oxidized [NADPH--hemoprotein reductase] + H2O + 2 H(+). It functions in the pathway secondary metabolite biosynthesis. Its function is as follows. Cytochrome P450 monooxygenase; part of the gene cluster that mediates the biosynthesis of sphingofungins, bioactive molecules acting as sphingolipid inhibitors via inhibiting serine palmitoyl transferase (SPT). Within the pathway, sphH catalyzes the conversion of presphingofungin into sphingofungin B1 via hydroxylagtion at position C-14. Sphingofungin biosynthesis starts with the PKS sphB that produces an C18 polyketide precursor 3-hydroxyoctadeca-4,10-dienoyl-ACP containing one delta-6 desaturation and one delta-12 desaturation. The aminoacyl transferase sphA uses the sphB product to produce 3-keto-presphingofungin by adding an aminomalonate molecule. SphF then reduces the C-3 ketone of 3-keto-presphingofungin which leads to presphingofungin. The cytochrome P450 monooxygenase sphH converts presphingofungin into sphingofungin B1 which is further converted to sphingofungin B by the dioxygenase sphC. SphC is also able to convert presphingofungin into sphingofungin B2. The acetyltransferase sphE acetylates sphingofungin B to produce sphingofungin C, but can also convert sphingofungin B1 into sphingofungin C1 and sphingofungin B2 into sphingofungin C2. Finally, sphingofungin C can be spontaneously converted into sphingofungin D. This chain is Cytochrome P450 monooxygenase sphH, found in Aspergillus fumigatus (strain CBS 144.89 / FGSC A1163 / CEA10) (Neosartorya fumigata).